Reading from the N-terminus, the 461-residue chain is L-seryl-tRNA(Sec) selenium transferase (461 aa).

N6-(pyridoxal phosphate)lysine is present on Lys294.

Belongs to the SelA family. Pyridoxal 5'-phosphate serves as cofactor.

The protein resides in the cytoplasm. It catalyses the reaction L-seryl-tRNA(Sec) + selenophosphate + H(+) = L-selenocysteinyl-tRNA(Sec) + phosphate. Its pathway is aminoacyl-tRNA biosynthesis; selenocysteinyl-tRNA(Sec) biosynthesis; selenocysteinyl-tRNA(Sec) from L-seryl-tRNA(Sec) (bacterial route): step 1/1. Converts seryl-tRNA(Sec) to selenocysteinyl-tRNA(Sec) required for selenoprotein biosynthesis. The sequence is that of L-seryl-tRNA(Sec) selenium transferase from Haemophilus influenzae (strain 86-028NP).